Here is a 287-residue protein sequence, read N- to C-terminus: Diphthine methyl ester synthase (287 aa).

Residues Leu9, Asp84, Gly87, 112–113 (SI), Val163, Val221, and His248 each bind S-adenosyl-L-methionine.

This sequence belongs to the diphthine synthase family.

It is found in the cytoplasm. It catalyses the reaction 2-[(3S)-amino-3-carboxypropyl]-L-histidyl-[translation elongation factor 2] + 4 S-adenosyl-L-methionine = diphthine methyl ester-[translation elongation factor 2] + 4 S-adenosyl-L-homocysteine + 3 H(+). The protein operates within protein modification; peptidyl-diphthamide biosynthesis. S-adenosyl-L-methionine-dependent methyltransferase that catalyzes four methylations of the modified target histidine residue in translation elongation factor 2 (EF-2), to form an intermediate called diphthine methyl ester. The four successive methylation reactions represent the second step of diphthamide biosynthesis. This Gibberella zeae (strain ATCC MYA-4620 / CBS 123657 / FGSC 9075 / NRRL 31084 / PH-1) (Wheat head blight fungus) protein is Diphthine methyl ester synthase (DPH5).